Reading from the N-terminus, the 361-residue chain is Salt tolerance receptor-like cytoplasmic kinase 1 (361 aa).

S-palmitoyl cysteine attachment occurs at residues Cys5, Cys10, and Cys14. Residues 67-347 enclose the Protein kinase domain; the sequence is GFSSRVIGHG…RALQEKTSAL (281 aa). ATP is bound by residues 73–81 and Lys95; that span reads IGHGGFSTV. The Proton acceptor role is filled by Asp195.

It belongs to the protein kinase superfamily. Ser/Thr protein kinase family. In terms of assembly, self-interacts. Interacts with CATA, CATB and CATC at the plasma membrane. In terms of processing, palmitoylated. Palmotylation at Cys-5, Cys-10 and Cys-14 by DHHC9 is required for plasma membrane targeting and STRK1 function. Post-translationally, autophosphorylated. Accumulates in seeds. Mainly expressed in young roots, and, to a lower extent, in leaf veins, seedlings, stems, leaf sheath and young spikelet.

The protein resides in the cell membrane. The enzyme catalyses L-seryl-[protein] + ATP = O-phospho-L-seryl-[protein] + ADP + H(+). The catalysed reaction is L-threonyl-[protein] + ATP = O-phospho-L-threonyl-[protein] + ADP + H(+). It carries out the reaction L-tyrosyl-[protein] + ATP = O-phospho-L-tyrosyl-[protein] + ADP + H(+). In terms of biological role, acts probably as a dual specificity protein kinase. Regulates hydrogen peroxide (H(2)O(2)) homeostasis and improves salt tolerance by phosphorylating tyrosine residues of CATC thus activating its catalase activity. Promotes growth at the seedling stage and prevents grain yield loss under salt stress conditions. The chain is Salt tolerance receptor-like cytoplasmic kinase 1 from Oryza sativa subsp. japonica (Rice).